The sequence spans 317 residues: Beta-ketoacyl-[acyl-carrier-protein] synthase III (317 aa).

Catalysis depends on residues cysteine 112 and histidine 244. Positions 245–249 (QANLR) are ACP-binding. Asparagine 274 is an active-site residue.

The protein belongs to the thiolase-like superfamily. FabH family. As to quaternary structure, homodimer.

Its subcellular location is the cytoplasm. The enzyme catalyses malonyl-[ACP] + acetyl-CoA + H(+) = 3-oxobutanoyl-[ACP] + CO2 + CoA. It functions in the pathway lipid metabolism; fatty acid biosynthesis. In terms of biological role, catalyzes the condensation reaction of fatty acid synthesis by the addition to an acyl acceptor of two carbons from malonyl-ACP. Catalyzes the first condensation reaction which initiates fatty acid synthesis and may therefore play a role in governing the total rate of fatty acid production. Possesses both acetoacetyl-ACP synthase and acetyl transacylase activities. Its substrate specificity determines the biosynthesis of branched-chain and/or straight-chain of fatty acids. This Pectobacterium atrosepticum (strain SCRI 1043 / ATCC BAA-672) (Erwinia carotovora subsp. atroseptica) protein is Beta-ketoacyl-[acyl-carrier-protein] synthase III.